A 156-amino-acid chain; its full sequence is Small ribosomal subunit protein uS7 (156 aa).

Belongs to the universal ribosomal protein uS7 family. Part of the 30S ribosomal subunit. Contacts proteins S9 and S11.

One of the primary rRNA binding proteins, it binds directly to 16S rRNA where it nucleates assembly of the head domain of the 30S subunit. Is located at the subunit interface close to the decoding center, probably blocks exit of the E-site tRNA. This is Small ribosomal subunit protein uS7 from Streptococcus gordonii (strain Challis / ATCC 35105 / BCRC 15272 / CH1 / DL1 / V288).